The sequence spans 195 residues: Putative NADH dehydrogenase/NAD(P)H nitroreductase Caul_0018 (195 aa).

Belongs to the nitroreductase family. HadB/RutE subfamily. Requires FMN as cofactor.

This is Putative NADH dehydrogenase/NAD(P)H nitroreductase Caul_0018 from Caulobacter sp. (strain K31).